The sequence spans 713 residues: F-box/WD repeat-containing protein 7 (713 aa).

The interval 1–150 (MNQELLSVGS…DEHTHNSNVT (150 aa)) is disordered. Serine 26 is subject to Phosphoserine. The span at 46–55 (RHQEEEHTAR) shows a compositional bias: basic and acidic residues. The segment covering 69 to 84 (QNDSQQGQVEENNNRF) has biased composition (polar residues). Residues 87–135 (VDEDSSGNQEEQEEDEEHAGEQEEEEEEEEEEEEEEEMDQESDDFDQSD) are compositionally biased toward acidic residues. A coiled-coil region spans residues 94–136 (NQEEQEEDEEHAGEQEEEEEEEEEEEEEEEMDQESDDFDQSDD). Residues 136 to 145 (DSSREDEHTH) show a composition bias toward basic and acidic residues. Threonine 211 carries the post-translational modification Phosphothreonine. Position 233 is a phosphoserine (serine 233). The F-box domain maps to 284–330 (RDFISLLPKELALYVLSFLEPKDLLQAAQTCRYWRILAEDNLLWREK). WD repeat units lie at residues 384–424 (GHDD…RTLV), 426–462 (HTGG…CIHT), 465–504 (GHTS…HVLM), 506–542 (HVAA…CLHT), 545–584 (GHTN…HTLT), 586–624 (HQSL…QTLQ), and 628–665 (KHQS…FIRN).

Homodimer; homodimerization plays a role in substrate binding and/or ubiquitination and degradation. Component of the SCF(FBXW7) complex consisting of CUL1, RBX1, SKP1 and FBXW7. Interacts (via F-box domain) with SKP1. Interacts (via F-box domain) with pseudophosphatase STYX; the interaction is direct and prevents FBXW7 interaction with SKP1. Interacts with cyclin-E (CCNE1 or CCNE2). Interacts with PSEN1. Forms a trimeric complex with NOTCH1 and SGK1. Interacts with NOTCH1 intracellular domain/NICD and NOTCH4 intracellular domain/NICD. Interacts with NOTCH2 intracellular domain (N2ICD). Interacts with MYC (when phosphorylated). Interacts with USP28, counteracting ubiquitination of MYC. Interacts (when phosphorylated at Thr-211) with PIN1, disrupting FBXW7 dimerization and promoting FBXW7 autoubiquitination and degradation. Interacts with UBE2QL1. Interacts with FAM83D; promotes FBXW7 degradation. Interacts with MYCN; FBXW7 competes with AURKA for binding to unphosphorylated MYCN but not for binding to phosphorylated MYCN. Interacts with JUN. Found in a complex with JUN and PRR7. Interacts with JUN and PRR7; the interaction inhibits ubiquitination-mediated JUN degradation, promoting its phosphorylation and transcriptional activity. Interacts with NFE2L1. Interacts with NR1D1. Interacts with RICTOR; mediates RICTOR ubiquitination and degradation. In terms of processing, phosphorylation at Thr-211 promotes interaction with PIN1, leading to disrupt FBXW7 dimerization and promoting FBXW7 autoubiquitination and degradation. Phosphorylated by ATM at Ser-26 in response to DNA damage, promoting recruitment to DNA damage sites and 'Lys-63'-linked ubiquitination of phosphorylated XRCC4. Ubiquitinated: autoubiquitinates following phosphorylation at Thr-211 and subsequent interaction with PIN1. Ubiquitination leads to its degradation.

The protein localises to the nucleus. It localises to the nucleoplasm. Its subcellular location is the chromosome. Its pathway is protein modification; protein ubiquitination. Substrate recognition component of a SCF (SKP1-CUL1-F-box protein) E3 ubiquitin-protein ligase complex which mediates the ubiquitination and subsequent proteasomal degradation of target proteins. Recognizes and binds phosphorylated sites/phosphodegrons within target proteins and thereafter brings them to the SCF complex for ubiquitination. Identified substrates include cyclin-E (CCNE1 or CCNE2), JUN, MYC, NOTCH1 released notch intracellular domain (NICD), NOTCH2, MCL1, MLST8, RICTOR and probably PSEN1. Acts as a negative regulator of JNK signaling by binding to phosphorylated JUN and promoting its ubiquitination and subsequent degradation. SCF(FBXW7) complex mediates the ubiquitination and subsequent degradation of NFE2L1. Involved in bone homeostasis and negative regulation of osteoclast differentiation. Regulates the amplitude of the cyclic expression of hepatic core clock genes and genes involved in lipid and glucose metabolism via ubiquitination and proteasomal degradation of their transcriptional repressor NR1D1; CDK1-dependent phosphorylation of NR1D1 is necessary for SCF(FBXW7)-mediated ubiquitination. Also able to promote 'Lys-63'-linked ubiquitination in response to DNA damage. The SCF(FBXW7) complex facilitates double-strand break repair following phosphorylation by ATM: phosphorylation promotes localization to sites of double-strand breaks and 'Lys-63'-linked ubiquitination of phosphorylated XRCC4, enhancing DNA non-homologous end joining. The sequence is that of F-box/WD repeat-containing protein 7 from Rattus norvegicus (Rat).